Here is a 298-residue protein sequence, read N- to C-terminus: ATP synthase gamma chain (298 aa).

It belongs to the ATPase gamma chain family. F-type ATPases have 2 components, CF(1) - the catalytic core - and CF(0) - the membrane proton channel. CF(1) has five subunits: alpha(3), beta(3), gamma(1), delta(1), epsilon(1). CF(0) has three main subunits: a, b and c.

The protein resides in the cell inner membrane. In terms of biological role, produces ATP from ADP in the presence of a proton gradient across the membrane. The gamma chain is believed to be important in regulating ATPase activity and the flow of protons through the CF(0) complex. This is ATP synthase gamma chain from Desulfosudis oleivorans (strain DSM 6200 / JCM 39069 / Hxd3) (Desulfococcus oleovorans).